The chain runs to 460 residues: Armadillo repeat-containing protein LFR (460 aa).

Positions Met-1 to Thr-30 are disordered. Residues Lys-8 to Ser-17 show a composition bias toward gly residues. ARM repeat units follow at residues Asp-227–His-269, Asn-323–Glu-362, and Asp-366–Ser-407.

In terms of assembly, interacts with AS2. In terms of tissue distribution, expressed in roots, leaves, stems and flowers.

The protein resides in the nucleus. In terms of biological role, involved in leaf and flower development. Plays roles in leaf development partly by associating with AS2 and repressing KNAT1/BP transcription. Required for the formation of anther cell layers and normal expression of genes that regulates anther development. This Arabidopsis thaliana (Mouse-ear cress) protein is Armadillo repeat-containing protein LFR.